The primary structure comprises 98 residues: Large ribosomal subunit protein uL23 (98 aa).

This sequence belongs to the universal ribosomal protein uL23 family. In terms of assembly, part of the 50S ribosomal subunit. Contacts protein L29, and trigger factor when it is bound to the ribosome.

In terms of biological role, one of the early assembly proteins it binds 23S rRNA. One of the proteins that surrounds the polypeptide exit tunnel on the outside of the ribosome. Forms the main docking site for trigger factor binding to the ribosome. The protein is Large ribosomal subunit protein uL23 of Dinoroseobacter shibae (strain DSM 16493 / NCIMB 14021 / DFL 12).